The chain runs to 717 residues: Fatty acid oxidation complex subunit alpha (717 aa).

The interval 1-190 (MIHAGNAITV…KDGAVDAVVA (190 aa)) is enoyl-CoA hydratase/isomerase. Asp298 lines the substrate pocket. The interval 313–717 (HPVNQAAVLG…MAANNKKFYG (405 aa)) is 3-hydroxyacyl-CoA dehydrogenase. NAD(+)-binding positions include Met326, Asp345, 402–404 (VTE), Lys409, and Ser431. The For 3-hydroxyacyl-CoA dehydrogenase activity role is filled by His452. NAD(+) is bound at residue Asn455. Position 502 (Asn502) interacts with substrate.

In the N-terminal section; belongs to the enoyl-CoA hydratase/isomerase family. This sequence in the C-terminal section; belongs to the 3-hydroxyacyl-CoA dehydrogenase family. Heterotetramer of two alpha chains (FadB) and two beta chains (FadA).

It carries out the reaction a (3S)-3-hydroxyacyl-CoA + NAD(+) = a 3-oxoacyl-CoA + NADH + H(+). The enzyme catalyses a (3S)-3-hydroxyacyl-CoA = a (2E)-enoyl-CoA + H2O. The catalysed reaction is a 4-saturated-(3S)-3-hydroxyacyl-CoA = a (3E)-enoyl-CoA + H2O. It catalyses the reaction (3S)-3-hydroxybutanoyl-CoA = (3R)-3-hydroxybutanoyl-CoA. It carries out the reaction a (3Z)-enoyl-CoA = a 4-saturated (2E)-enoyl-CoA. The enzyme catalyses a (3E)-enoyl-CoA = a 4-saturated (2E)-enoyl-CoA. The protein operates within lipid metabolism; fatty acid beta-oxidation. Involved in the aerobic and anaerobic degradation of long-chain fatty acids via beta-oxidation cycle. Catalyzes the formation of 3-oxoacyl-CoA from enoyl-CoA via L-3-hydroxyacyl-CoA. It can also use D-3-hydroxyacyl-CoA and cis-3-enoyl-CoA as substrate. The sequence is that of Fatty acid oxidation complex subunit alpha from Acinetobacter baumannii (strain AB307-0294).